A 415-amino-acid chain; its full sequence is Esterase FrsA (415 aa).

This sequence belongs to the FrsA family.

The catalysed reaction is a carboxylic ester + H2O = an alcohol + a carboxylate + H(+). Its function is as follows. Catalyzes the hydrolysis of esters. The protein is Esterase FrsA of Yersinia enterocolitica serotype O:8 / biotype 1B (strain NCTC 13174 / 8081).